The sequence spans 312 residues: Ribosomal RNA small subunit methyltransferase H (312 aa).

S-adenosyl-L-methionine is bound by residues 34–36 (AGH), Asp-54, Phe-81, Asp-102, and Gln-109.

This sequence belongs to the methyltransferase superfamily. RsmH family.

Its subcellular location is the cytoplasm. It carries out the reaction cytidine(1402) in 16S rRNA + S-adenosyl-L-methionine = N(4)-methylcytidine(1402) in 16S rRNA + S-adenosyl-L-homocysteine + H(+). In terms of biological role, specifically methylates the N4 position of cytidine in position 1402 (C1402) of 16S rRNA. The chain is Ribosomal RNA small subunit methyltransferase H from Geotalea daltonii (strain DSM 22248 / JCM 15807 / FRC-32) (Geobacter daltonii).